The sequence spans 131 residues: Urease subunit beta (131 aa).

Residues 100 to 131 (PLDPAAGVTSDEDAASAVVPRGAETSEREARA) form a disordered region.

The protein belongs to the urease beta subunit family. In terms of assembly, heterotrimer of UreA (gamma), UreB (beta) and UreC (alpha) subunits. Three heterotrimers associate to form the active enzyme.

Its subcellular location is the cytoplasm. The enzyme catalyses urea + 2 H2O + H(+) = hydrogencarbonate + 2 NH4(+). It functions in the pathway nitrogen metabolism; urea degradation; CO(2) and NH(3) from urea (urease route): step 1/1. The sequence is that of Urease subunit beta from Kocuria rhizophila (strain ATCC 9341 / DSM 348 / NBRC 103217 / DC2201).